The following is a 605-amino-acid chain: Insulin-like growth factor-binding protein complex acid labile subunit (605 aa).

The signal sequence occupies residues 1-27 (MALRKGGLALALLLLSWVALGPRSLEG). An LRRNT domain is found at 32-74 (TPGEAEGPACPATCACSYDDEVNELSVFCSSRNLTRLPDGIPG). 2 disulfides stabilise this stretch: cysteine 41–cysteine 47 and cysteine 45–cysteine 60. 3 N-linked (GlcNAc...) asparagine glycosylation sites follow: asparagine 64, asparagine 85, and asparagine 96. 19 LRR repeats span residues 75 to 96 (GTQALWLDSNNLSSIPPAAFRN), 99 to 120 (SLAFLNLQGGQLGSLEPQALLG), 123 to 144 (NLCHLHLERNQLRSLAVGTFAY), 147 to 168 (ALALLGLSNNRLSRLEDGLFEG), 171 to 192 (NLWDLNLGWNSLAVLPDAAFRG), 195 to 216 (GLRELVLAGNRLAYLQPALFSG), 219 to 240 (ELRELDLSRNALRAIKANVFAQ), 243 to 264 (RLQKLYLDRNLIAAVAPGAFLG), 267 to 288 (ALRWLDLSHNRVAGLLEDTFPG), 291 to 312 (GLRVLRLSHNAIASLRPRTFED), 315 to 336 (FLEELQLGHNRIRQLAERSFEG), 339 to 360 (QLEVLTLDHNQLQEVKVGAFLG), 363 to 384 (NVAVMNLSGNCLRNLPEQVFRG), 387 to 408 (KLHSLHLEGSCLGRIRPHTFAG), 411 to 432 (GLRRLFLKDNGLVGIEEQSLWG), 435 to 456 (ELLELDLTSNQLTHLPHQLFQG), 459 to 480 (KLEYLLLSHNRLAELPADALGP), 483 to 504 (RAFWLDVSHNRLEALPGSLLAS), and 507 to 528 (RLRYLNLRNNSLRTFTPQPPGL). Asparagine 368 carries an N-linked (GlcNAc...) asparagine glycan. N-linked (GlcNAc...) asparagine glycosylation is present at asparagine 515. The region spanning 536 to 605 (NPWDCSCPLK…DLGEAHFAPC (70 aa)) is the LRRCT domain. 3 disulfide bridges follow: cysteine 540–cysteine 583, cysteine 542–cysteine 605, and cysteine 566–cysteine 571. The N-linked (GlcNAc...) asparagine glycan is linked to asparagine 580.

Forms a ternary complex with IGF1 and IGFBP3.

The protein resides in the secreted. Its subcellular location is the extracellular space. In terms of biological role, involved in protein-protein interactions that result in protein complexes, receptor-ligand binding or cell adhesion. This is Insulin-like growth factor-binding protein complex acid labile subunit (IGFALS) from Papio hamadryas (Hamadryas baboon).